A 638-amino-acid chain; its full sequence is MPVITLPDGSQRAFDNPVSVLDVANDIGPGLAKATIAGKVNGELVDAVDMIDADAQLQIITAKDEEGLEILRHSCAHLLGHAIKQLWPNTKMAIGPVIDNGFYYDVDMEESLTQEDLAKLEKRMLELAKTNYNVVKNKVSWQEARDAFEARGESYKMEILDENISKDDRPALYQHEEYTDMCRGPHVPNMKFCHHFKLMKVAGAYWRGDSDNKMLQRIYGTAWADKKQLKSYLQRLEEAEKRDHRKIGKALNLFHWQEEAPGMVFWHNDGWSIYTELESFVRKKLREYGYDEVKGPLMMDRSLWEKSGHWDKYAENMFTTESEKREYAVKPMNCPGHVQIFNQGLKSYRDLPLRMAEFGCCHRNEPSGALHGLMRVRGFTQDDAHIFCTEEQILEEVSGCIKMVYETYAAFGFENIKVKLSTRPEKRVGADEIWDKSEAALAEALKANDIEFDYQPGEGAFYGPKIEFTLHDCLDRAWQCGTVQLDFSMPGRLGSTYVAEDGERKVPVMIHRAILGSLERFIGILTEEFAGFFPLWLAPQQVVVMNITDKQADYASDCVKKLQDLGFRAKSDLRNEKIGFKIREHTLKRIPYMLVVGDKEMEAGEVAVRSRRGDDLGKMGLEDFIAMAQQEVVEKTIK.

The 61-residue stretch at Met1–Thr61 folds into the TGS domain. The segment at Asp243–Pro534 is catalytic. Zn(2+)-binding residues include Cys334, His385, and His511.

It belongs to the class-II aminoacyl-tRNA synthetase family. In terms of assembly, homodimer. The cofactor is Zn(2+).

The protein resides in the cytoplasm. It catalyses the reaction tRNA(Thr) + L-threonine + ATP = L-threonyl-tRNA(Thr) + AMP + diphosphate + H(+). Catalyzes the attachment of threonine to tRNA(Thr) in a two-step reaction: L-threonine is first activated by ATP to form Thr-AMP and then transferred to the acceptor end of tRNA(Thr). Also edits incorrectly charged L-seryl-tRNA(Thr). The chain is Threonine--tRNA ligase from Alteromonas mediterranea (strain DSM 17117 / CIP 110805 / LMG 28347 / Deep ecotype).